Consider the following 347-residue polypeptide: Nuclear distribution protein nudE-like 1 (347 aa).

Residues 28-190 adopt a coiled-coil conformation; it reads QSFQEARDEL…LAVRERQQEV (163 aa). Positions 56–166 are self-association; it reads VQAEQRNRDL…LDEKESLLVS (111 aa). The segment at 64 to 189 is interaction with KATNB1; it reads DLQADNQRLK…ELAVRERQQE (126 aa). Residues 114–133 are required for interaction with PAFAH1B1; that stretch reads YVRELEQANDDLERAKRATI. Residues 175–347 are interaction with CENPF; that stretch reads RDLRQELAVR…SAPGMLPLSV (173 aa). Residues 189–256 are interaction with YWHAE; the sequence is EVTRKSAPSS…SARISALNIV (68 aa). The segment at 191 to 347 is interaction with NEFL; it reads TRKSAPSSPT…SAPGMLPLSV (157 aa). Residues 195–256 are interaction with KATNA1; sequence APSSPTLDCE…SARISALNIV (62 aa). The residue at position 215 (Ser215) is a Phosphoserine. Thr219 bears the Phosphothreonine; by CDK1 and MAPK1 mark. Ser231 is subject to Phosphoserine. The interaction with DISC1 stretch occupies residues 241–280; that stretch reads TSPLTPSARISALNIVGDLLRKVGALESKLAACRNFAKDQ. Ser242 bears the Phosphoserine; by CDK1 mark. Thr245 is subject to Phosphothreonine; by CDK1 and MAPK1. The interval 256-291 is required for localization to the centrosome and interaction with dynein, dynactin, tubulin gamma, PCM1 and PCNT; sequence VGDLLRKVGALESKLAACRNFAKDQASRKSYISGNV. Residue Cys273 is the site of S-palmitoyl cysteine; by ZDHHC2, ZDHHC3 and ZDHHC7 attachment. A disordered region spans residues 314–347; it reads KGAVNGFDPAPPPPDPGLGSSRPSSAPGMLPLSV. Ser346 is modified (phosphoserine).

This sequence belongs to the nudE family. As to quaternary structure, self-associates. Interacts with DISC1, dynein, dynactin, tubulin gamma, KATNA1, KATNB1, microtubules, PAFAH1B1, PCM1, PCNT, and YWHAE. Interacts directly with NEFL and indirectly with NEFH. Interacts (via C-terminus) with CENPF. Interacts with ZNF365. Interacts with PLEKHM1 (via N- and C-terminus). Interacts with GTP-bound RAB9A; the interaction may lead to RAB9A-dynein motor tethering. In terms of processing, phosphorylated in mitosis. Can be phosphorylated by CDK1, CDK5 and MAPK1. Phosphorylation by CDK5 promotes interaction with KATNA1 and YWHAE. Post-translationally, palmitoylation at Cys-273 reduces affinity for dynein.

The protein localises to the cytoplasm. It localises to the cytoskeleton. The protein resides in the microtubule organizing center. Its subcellular location is the centrosome. It is found in the chromosome. The protein localises to the centromere. It localises to the kinetochore. The protein resides in the spindle. In terms of biological role, required for organization of the cellular microtubule array and microtubule anchoring at the centrosome. May regulate microtubule organization at least in part by targeting the microtubule severing protein KATNA1 to the centrosome. Also positively regulates the activity of the minus-end directed microtubule motor protein dynein. May enhance dynein-mediated microtubule sliding by targeting dynein to the microtubule plus ends. Required for several dynein- and microtubule-dependent processes such as the maintenance of Golgi integrity, the centripetal motion of secretory vesicles and the coupling of the nucleus and centrosome. Also required during brain development for the migration of newly formed neurons from the ventricular/subventricular zone toward the cortical plate. Required for mitosis in some cell types but appears to be dispensible for mitosis in cortical neuronal progenitors, which instead requires NDE1. Facilitates the polymerization of neurofilaments from the individual subunits NEFH and NEFL. Positively regulates lysosome peripheral distribution and ruffled border formation in osteoclasts. Plays a role, together with DISC1, in the regulation of neurite outgrowth. May act as a RAB9A/B effector that tethers RAB9-associated late endosomes to the dynein motor for their retrograde transport to the trans-Golgi network. The chain is Nuclear distribution protein nudE-like 1 (NDEL1) from Macaca fascicularis (Crab-eating macaque).